The sequence spans 407 residues: Histidine--tRNA ligase (407 aa).

The protein belongs to the class-II aminoacyl-tRNA synthetase family. Homodimer.

The protein resides in the cytoplasm. It carries out the reaction tRNA(His) + L-histidine + ATP = L-histidyl-tRNA(His) + AMP + diphosphate + H(+). The sequence is that of Histidine--tRNA ligase from Wolbachia pipientis subsp. Culex pipiens (strain wPip).